Consider the following 590-residue polypeptide: Complement component C8 beta chain (590 aa).

The signal sequence occupies residues 1-32; the sequence is MKKSWTWTWRVPAELLLLCAALGCLCVPGSRS. The propeptide occupies 33 to 54; it reads ERPRSLEPTVVNRSLAKSRHSR. An N-linked (GlcNAc...) asparagine glycan is attached at N44. Positions 64–117 constitute a TSP type-1 1 domain; that stretch reads DCELSSWSSWTMCDPCQKKRYRHAYLLRPSQFNGEPCNFSDKEVEDCATSRPCR. 7 disulfide bridges follow: C65–C100, C76–C110, C79–C116, C122–C133, C127–C146, C140–C155, and C162–C200. 2 C-linked (Man) tryptophan glycosylation sites follow: W70 and W73. A glycan (N-linked (GlcNAc...) asparagine) is linked at N101. The region spanning 120-157 is the LDL-receptor class A domain; it reads VRCEGFVCAQTGRCVNRRLLCNGDNDCGDQSDEANCRK. The Ca(2+) site is built by L138, N141, D143, D145, D151, and E152. The 347-residue stretch at 158-504 folds into the MACPF domain; the sequence is IYKKCHHEME…EFQGEVSPCR (347 aa). Beta stranded transmembrane passes span 252–259, 262–269, 379–386, and 392–399; these read STFNLGFK, SIFEFGIN, AKNDFKLG, and VYVSLGVS. A disulfide bond links C378 and C403. At T418 the chain carries Phosphothreonine. 4 cysteine pairs are disulfide-bonded: C503–C550, C505–C521, C508–C523, and C525–C534. Residues 505 to 535 enclose the EGF-like domain; the sequence is CAPCQGNGVPVQKGSRCDCICPVGFQGSACE. A TSP type-1 2 domain is found at 545–588; it reads DGRWSCWSRWSSCSGGQKTRRRQCNNPAPQDGGSPCSGPASETL. Residues W551 and W554 are each glycosylated (C-linked (Man) tryptophan). C557 and C590 form a disulfide bridge. The interval 557–590 is disordered; that stretch reads CSGGQKTRRRQCNNPAPQDGGSPCSGPASETLAC.

This sequence belongs to the complement C6/C7/C8/C9 family. As to quaternary structure, heterotrimer of 3 chains: alpha (C8A), beta (C8B) and gamma (C8G); the alpha and gamma chains are disulfide bonded. Component of the membrane attack complex (MAC), composed of complement C5b, C6, C7, C8A, C8B, C8G and multiple copies of the pore-forming subunit C9. N-glycosylated; contains one or two bound glycans. Not O-glycosylated.

It is found in the secreted. Its subcellular location is the target cell membrane. Its activity is regulated as follows. Membrane attack complex (MAC) assembly is inhibited by CD59, thereby protecting self-cells from damage during complement activation. CD59 acts by binding to the beta-haipins of C8 (C8A and C8B), forming an intermolecular beta-sheet that prevents incorporation of the multiple copies of C9 required for complete formation of the osmolytic pore. MAC assembly is also inhibited by clusterin (CLU) chaperones that inhibit polymerization of C9. Functionally, component of the membrane attack complex (MAC), a multiprotein complex activated by the complement cascade, which inserts into a target cell membrane and forms a pore, leading to target cell membrane rupture and cell lysis. The MAC is initiated by proteolytic cleavage of C5 into complement C5b in response to the classical, alternative, lectin and GZMK complement pathways. The complement pathways consist in a cascade of proteins that leads to phagocytosis and breakdown of pathogens and signaling that strengthens the adaptive immune system. C8B, together with C8A and C8G, inserts into the target membrane, but does not form pores by itself. During MAC assembly, associates with C5b, C6 and C7 to form the C5b8 intermediate complex that inserts into the target membrane and traverses the bilayer increasing membrane rigidity. This is Complement component C8 beta chain (C8B) from Oryctolagus cuniculus (Rabbit).